We begin with the raw amino-acid sequence, 294 residues long: Glutamate-binding protein GluB (294 aa).

The N-terminal stretch at 1 to 26 (MSHKRMFTRLAAATSAAVLAGITLTA) is a signal peptide. Cys-27 carries N-palmitoyl cysteine lipidation. Cys-27 carries S-diacylglycerol cysteine lipidation.

This sequence belongs to the bacterial solute-binding protein 3 family. As to quaternary structure, the complex is composed of two ATP-binding proteins (GluA), two transmembrane proteins (GluC and GluD) and a solute-binding protein (GluB).

It localises to the cell membrane. Part of the ABC transporter complex GluABCD involved in glutamate uptake. Binds glutamate with a high affinity. The chain is Glutamate-binding protein GluB from Corynebacterium efficiens (strain DSM 44549 / YS-314 / AJ 12310 / JCM 11189 / NBRC 100395).